The sequence spans 144 residues: Maximins 8/H7 (144 aa).

An N-terminal signal peptide occupies residues 1-18 (MKFKYIVAVSFLIASAYA). Residues 19 to 43 (RSEENDEQSLSQRDVLEEESLREIR) constitute a propeptide that is removed on maturation. Asparagine amide is present on Asn-70. Residues 74–123 (TAEDHEVMKRLEAVMRDLDSLDYPEEASERETRGFNQEEIANLFTKKEKR) constitute a propeptide that is removed on maturation. Leu-143 is modified (leucine amide).

This sequence belongs to the bombinin family. Expressed by the skin glands.

The protein localises to the secreted. In terms of biological role, maximin-8 shows antimicrobial activity against bacteria and against the fungus C.albicans. It has little hemolytic activity. Functionally, maximin-H7 shows antimicrobial activity against bacteria and against the fungus C.albicans. Shows strong hemolytic activity. The polypeptide is Maximins 8/H7 (Bombina maxima (Giant fire-bellied toad)).